The following is a 128-amino-acid chain: Small ribosomal subunit protein uS12 (128 aa).

The tract at residues 1–25 (MPTIQQLIRRGRKTKASKTASPALE) is disordered. Asp89 is modified (3-methylthioaspartic acid). The segment at 101-128 (SLDTSGVADRRNSRSKYGAKRPKEAAAK) is disordered.

Belongs to the universal ribosomal protein uS12 family. As to quaternary structure, part of the 30S ribosomal subunit. Contacts proteins S8 and S17. May interact with IF1 in the 30S initiation complex.

In terms of biological role, with S4 and S5 plays an important role in translational accuracy. Its function is as follows. Interacts with and stabilizes bases of the 16S rRNA that are involved in tRNA selection in the A site and with the mRNA backbone. Located at the interface of the 30S and 50S subunits, it traverses the body of the 30S subunit contacting proteins on the other side and probably holding the rRNA structure together. The combined cluster of proteins S8, S12 and S17 appears to hold together the shoulder and platform of the 30S subunit. This Chlorobium phaeobacteroides (strain BS1) protein is Small ribosomal subunit protein uS12.